The chain runs to 101 residues: Small ribosomal subunit protein uS14 (101 aa).

The protein belongs to the universal ribosomal protein uS14 family. As to quaternary structure, part of the 30S ribosomal subunit. Contacts proteins S3 and S10.

Functionally, binds 16S rRNA, required for the assembly of 30S particles and may also be responsible for determining the conformation of the 16S rRNA at the A site. This chain is Small ribosomal subunit protein uS14, found in Chromobacterium violaceum (strain ATCC 12472 / DSM 30191 / JCM 1249 / CCUG 213 / NBRC 12614 / NCIMB 9131 / NCTC 9757 / MK).